Reading from the N-terminus, the 401-residue chain is Nodulation protein E (401 aa).

The 399-residue stretch at 2 to 400 (DRRVVITGIG…GTNAVLAFRQ (399 aa)) folds into the Ketosynthase family 3 (KS3) domain. Active-site for beta-ketoacyl synthase activity residues include Cys162, His294, and His331. Residues 329-348 (HAHCLGAASALEMIACVMAI) traverse the membrane as a helical segment.

It belongs to the thiolase-like superfamily. Beta-ketoacyl-ACP synthases family.

The protein localises to the cell inner membrane. In terms of biological role, proposed to synthesize NOD factor fatty acyl chain. Involved in the synthesis of a highly unsaturated fatty acid moiety, which forms part of a lipo-oligosaccharide that is responsible for host specificity. This is Nodulation protein E (nodE) from Rhizobium leguminosarum bv. trifolii.